We begin with the raw amino-acid sequence, 331 residues long: CRISPR-associated endonuclease Cas1 (331 aa).

3 residues coordinate Mn(2+): Glu158, His223, and Asp238.

Belongs to the CRISPR-associated endonuclease Cas1 family. Homodimer, forms a heterotetramer with a Cas2 homodimer. Requires Mg(2+) as cofactor. Mn(2+) is required as a cofactor.

In terms of biological role, CRISPR (clustered regularly interspaced short palindromic repeat), is an adaptive immune system that provides protection against mobile genetic elements (viruses, transposable elements and conjugative plasmids). CRISPR clusters contain spacers, sequences complementary to antecedent mobile elements, and target invading nucleic acids. CRISPR clusters are transcribed and processed into CRISPR RNA (crRNA). Acts as a dsDNA endonuclease. Involved in the integration of spacer DNA into the CRISPR cassette. Plasmid targeted by CRISPR locus P1 transform wild-type cells very poorly. This Haloferax volcanii (strain ATCC 29605 / DSM 3757 / JCM 8879 / NBRC 14742 / NCIMB 2012 / VKM B-1768 / DS2) (Halobacterium volcanii) protein is CRISPR-associated endonuclease Cas1.